The primary structure comprises 353 residues: Glutamate 5-kinase (353 aa).

K8 contributes to the ATP binding site. Residues S47, D134, and N146 each contribute to the substrate site. Residue 198–204 participates in ATP binding; sequence TGGIRSK. Residues 262–339 enclose the PUA domain; the sequence is AGKIYVNKGA…SDLKKILGYE (78 aa).

The protein belongs to the glutamate 5-kinase family.

The protein resides in the cytoplasm. The catalysed reaction is L-glutamate + ATP = L-glutamyl 5-phosphate + ADP. Its pathway is amino-acid biosynthesis; L-proline biosynthesis; L-glutamate 5-semialdehyde from L-glutamate: step 1/2. In terms of biological role, catalyzes the transfer of a phosphate group to glutamate to form L-glutamate 5-phosphate. The polypeptide is Glutamate 5-kinase (Thermotoga maritima (strain ATCC 43589 / DSM 3109 / JCM 10099 / NBRC 100826 / MSB8)).